A 310-amino-acid chain; its full sequence is Cytochrome f (310 aa).

The N-terminal stretch at methionine 1–alanine 23 is a signal peptide. Residues tyrosine 28, cysteine 48, cysteine 51, and histidine 52 each coordinate heme. Residues isoleucine 277–lysine 297 traverse the membrane as a helical segment.

It belongs to the cytochrome f family. In terms of assembly, the 4 large subunits of the cytochrome b6-f complex are cytochrome b6, subunit IV (17 kDa polypeptide, PetD), cytochrome f and the Rieske protein, while the 4 small subunits are PetG, PetL, PetM and PetN. The complex functions as a dimer. Heme is required as a cofactor.

It localises to the cellular thylakoid membrane. Its function is as follows. Component of the cytochrome b6-f complex, which mediates electron transfer between photosystem II (PSII) and photosystem I (PSI), cyclic electron flow around PSI, and state transitions. In Prochlorococcus marinus (strain MIT 9313), this protein is Cytochrome f.